Reading from the N-terminus, the 405-residue chain is Terminal uridylyltransferase cid1 (405 aa).

Serine 90 is a binding site for UTP. Residues aspartate 101 and aspartate 103 each coordinate Mg(2+). Residues alanine 168, asparagine 171, threonine 172, lysine 193, lysine 197, serine 211, tyrosine 212, and histidine 336 each coordinate UTP. One can recognise a PAP-associated domain in the interval 267–336 (SLGSLLHGFF…AIEDPFEISH (70 aa)). Arginine 340 contacts ATP. Residues 377 to 405 (APIPPRRQKKTDEQSNKKLLNETDGDNSE) are disordered. Basic and acidic residues predominate over residues 386-397 (KTDEQSNKKLLN).

The protein belongs to the DNA polymerase type-B-like family. Requires Mg(2+) as cofactor. Mn(2+) is required as a cofactor.

It is found in the cytoplasm. It carries out the reaction RNA(n) + UTP = RNA(n)-3'-uridine ribonucleotide + diphosphate. The catalysed reaction is RNA(n) + ATP = RNA(n)-3'-adenine ribonucleotide + diphosphate. Cytoplasmic uridylyltransferase that mediates the terminal uridylation of mRNAs with short poly(A) tails such as such as act1, hcn1 and urg1 mRNAs, hence facilitating global mRNA decay. Uridylates the 3' ends of actin mRNAs upon S-phase arrest. Also has a weak poly(A) polymerase (PAP) activity. Residue His-336 is responsible for the specificity for UTP. Involved in cell cycle arrest where in association with crb2/rhp9 and chk1 it inhibits unscheduled mitosis. This is Terminal uridylyltransferase cid1 from Schizosaccharomyces pombe (strain 972 / ATCC 24843) (Fission yeast).